We begin with the raw amino-acid sequence, 661 residues long: UvrABC system protein B (661 aa).

The 158-residue stretch at 25-182 folds into the Helicase ATP-binding domain; that stretch reads AGLNSKKRSQ…NDLINLQYKR (158 aa). 38-45 contacts ATP; it reads GITGSGKT. The short motif at 91–114 is the Beta-hairpin element; sequence YYDYYQPEAYIARTDTFIEKDSSI. A Helicase C-terminal domain is found at 430–592; sequence QVEDLISEIQ…IIPKTINRAI (163 aa). The UVR domain occupies 621 to 656; sequence KANINKLNKEMLKAASNLEFEQAAKLRDQLKTLEAA.

Belongs to the UvrB family. Forms a heterotetramer with UvrA during the search for lesions. Interacts with UvrC in an incision complex.

Its subcellular location is the cytoplasm. The UvrABC repair system catalyzes the recognition and processing of DNA lesions. A damage recognition complex composed of 2 UvrA and 2 UvrB subunits scans DNA for abnormalities. Upon binding of the UvrA(2)B(2) complex to a putative damaged site, the DNA wraps around one UvrB monomer. DNA wrap is dependent on ATP binding by UvrB and probably causes local melting of the DNA helix, facilitating insertion of UvrB beta-hairpin between the DNA strands. Then UvrB probes one DNA strand for the presence of a lesion. If a lesion is found the UvrA subunits dissociate and the UvrB-DNA preincision complex is formed. This complex is subsequently bound by UvrC and the second UvrB is released. If no lesion is found, the DNA wraps around the other UvrB subunit that will check the other stand for damage. This is UvrABC system protein B from Rickettsia akari (strain Hartford).